Consider the following 143-residue polypeptide: Transcriptional regulator MraZ (143 aa).

2 SpoVT-AbrB domains span residues 5–47 (EYQH…PLTE) and 76–119 (AMEG…AKER).

The protein belongs to the MraZ family. As to quaternary structure, forms oligomers.

It is found in the cytoplasm. The protein localises to the nucleoid. This is Transcriptional regulator MraZ from Lactobacillus delbrueckii subsp. bulgaricus (strain ATCC 11842 / DSM 20081 / BCRC 10696 / JCM 1002 / NBRC 13953 / NCIMB 11778 / NCTC 12712 / WDCM 00102 / Lb 14).